The chain runs to 280 residues: Pantothenate synthetase (280 aa).

Residue 30 to 37 (MGALHEGH) participates in ATP binding. H37 acts as the Proton donor in catalysis. A (R)-pantoate-binding site is contributed by Q61. Q61 contacts beta-alanine. Position 147 to 150 (147 to 150 (GQKD)) interacts with ATP. Q153 lines the (R)-pantoate pocket. ATP contacts are provided by residues V176 and 184 to 187 (MSSR).

The protein belongs to the pantothenate synthetase family. Homodimer.

It localises to the cytoplasm. The catalysed reaction is (R)-pantoate + beta-alanine + ATP = (R)-pantothenate + AMP + diphosphate + H(+). The protein operates within cofactor biosynthesis; (R)-pantothenate biosynthesis; (R)-pantothenate from (R)-pantoate and beta-alanine: step 1/1. Functionally, catalyzes the condensation of pantoate with beta-alanine in an ATP-dependent reaction via a pantoyl-adenylate intermediate. This chain is Pantothenate synthetase, found in Thermodesulfovibrio yellowstonii (strain ATCC 51303 / DSM 11347 / YP87).